We begin with the raw amino-acid sequence, 324 residues long: Histidine N-acetyltransferase (324 aa).

The N-acetyltransferase domain maps to 15 to 151 (FEFVLAAEKE…GILLLSFNAP (137 aa)).

The catalysed reaction is L-histidine + acetyl-CoA = N(alpha)-acetyl-L-histidine + CoA + H(+). Enzyme responsible for the N-acetyl-histidine (NAH) synthesis, which is a major constituent of brain and lens of ectothermic vertebrates. This is Histidine N-acetyltransferase (hisat) from Xenopus tropicalis (Western clawed frog).